The chain runs to 3707 residues: CUB and sushi domain-containing protein 3 (3707 aa).

The segment covering Met-1 to Thr-21 has biased composition (basic and acidic residues). Positions Met-1–Arg-22 are disordered. Over Met-1–Ser-42 the chain is Cytoplasmic. Residues Gly-43–Tyr-63 traverse the membrane as a helical segment. Topologically, residues Thr-64–Ser-3630 are extracellular. Cystine bridges form between Cys-65–Cys-91, Cys-178–Cys-218, Cys-204–Cys-235, and Cys-241–Cys-267. Residues Cys-65 to Leu-173 enclose the CUB 1 domain. N-linked (GlcNAc...) asparagine glycosylation is found at Asn-73 and Asn-90. In terms of domain architecture, Sushi 1 spans Ser-176–Ala-237. Residues Cys-241–Ser-345 form the CUB 2 domain. The disordered stretch occupies residues His-388–Arg-437. Over residues Pro-411–Ser-426 the composition is skewed to polar residues. A Sushi 2 domain is found at Asn-484 to Val-545. 6 cysteine pairs are disulfide-bonded: Cys-486-Cys-526, Cys-512-Cys-543, Cys-548-Cys-574, Cys-664-Cys-704, Cys-690-Cys-717, and Cys-721-Cys-747. The CUB 3 domain maps to Cys-548–Ile-659. The Sushi 3 domain occupies Glu-662–Phe-719. The CUB 4 domain maps to Cys-721 to Phe-829. Asn-724 and Asn-823 each carry an N-linked (GlcNAc...) asparagine glycan. In terms of domain architecture, Sushi 4 spans Asn-832 to Ala-893. 3 disulfide bridges follow: Cys-834–Cys-875, Cys-860–Cys-891, and Cys-895–Cys-921. Positions Cys-895–Val-1003 constitute a CUB 5 domain. N-linked (GlcNAc...) asparagine glycosylation occurs at Asn-966. The Sushi 5 domain occupies Tyr-1008–Ala-1065. Disulfide bonds link Cys-1010/Cys-1050, Cys-1036/Cys-1063, and Cys-1067/Cys-1093. The 111-residue stretch at Cys-1067–Tyr-1177 folds into the CUB 6 domain. 3 N-linked (GlcNAc...) asparagine glycosylation sites follow: Asn-1092, Asn-1126, and Asn-1171. A Sushi 6 domain is found at Glu-1180–Ala-1239. Cystine bridges form between Cys-1182–Cys-1222, Cys-1208–Cys-1237, and Cys-1241–Cys-1267. The CUB 7 domain occupies Cys-1241–Phe-1349. Residue Asn-1280 is glycosylated (N-linked (GlcNAc...) asparagine). A Sushi 7 domain is found at Ser-1352–Ala-1412. Disulfide bonds link Cys-1354-Cys-1395, Cys-1381-Cys-1410, Cys-1414-Cys-1441, Cys-1528-Cys-1568, Cys-1554-Cys-1584, Cys-1588-Cys-1614, Cys-1701-Cys-1741, Cys-1727-Cys-1758, Cys-1762-Cys-1788, Cys-1878-Cys-1918, Cys-1904-Cys-1935, and Cys-1939-Cys-1965. The 110-residue stretch at Cys-1414–Ser-1523 folds into the CUB 8 domain. Residues Thr-1526 to Ala-1586 form the Sushi 8 domain. N-linked (GlcNAc...) asparagine glycosylation occurs at Asn-1536. The CUB 9 domain occupies Cys-1588–Lys-1696. 2 N-linked (GlcNAc...) asparagine glycosylation sites follow: Asn-1591 and Asn-1709. The 62-residue stretch at Glu-1699–Ala-1760 folds into the Sushi 9 domain. In terms of domain architecture, CUB 10 spans Cys-1762 to Val-1870. Asn-1781 carries an N-linked (GlcNAc...) asparagine glycan. The region spanning Thr-1876–Val-1937 is the Sushi 10 domain. Asn-1929 carries N-linked (GlcNAc...) asparagine glycosylation. The CUB 11 domain maps to Cys-1939 to Ile-2047. The N-linked (GlcNAc...) asparagine glycan is linked to Asn-2019. A Sushi 11 domain is found at Asp-2050–Ala-2109. Cystine bridges form between Cys-2052–Cys-2092, Cys-2078–Cys-2107, and Cys-2111–Cys-2137. Residues Cys-2111–Tyr-2219 enclose the CUB 12 domain. Residue Asn-2155 is glycosylated (N-linked (GlcNAc...) asparagine). The 60-residue stretch at Gln-2222–Ala-2281 folds into the Sushi 12 domain. Disulfide bonds link Cys-2224–Cys-2264, Cys-2250–Cys-2279, Cys-2283–Cys-2309, Cys-2395–Cys-2437, Cys-2423–Cys-2452, Cys-2456–Cys-2484, Cys-2569–Cys-2610, Cys-2596–Cys-2627, Cys-2632–Cys-2674, Cys-2658–Cys-2689, Cys-2694–Cys-2739, Cys-2725–Cys-2754, Cys-2759–Cys-2799, Cys-2785–Cys-2812, Cys-2817–Cys-2857, Cys-2843–Cys-2870, Cys-2875–Cys-2915, Cys-2901–Cys-2928, Cys-2933–Cys-2977, Cys-2963–Cys-2990, Cys-2995–Cys-3035, Cys-3021–Cys-3048, Cys-3056–Cys-3096, Cys-3082–Cys-3109, Cys-3114–Cys-3155, Cys-3141–Cys-3168, Cys-3173–Cys-3215, Cys-3199–Cys-3228, Cys-3233–Cys-3273, Cys-3259–Cys-3286, Cys-3291–Cys-3331, Cys-3317–Cys-3344, Cys-3352–Cys-3393, Cys-3379–Cys-3406, Cys-3411–Cys-3453, and Cys-3438–Cys-3466. The CUB 13 domain occupies Cys-2283–Val-2394. N-linked (GlcNAc...) asparagine glycans are attached at residues Asn-2286 and Asn-2291. Residues Arg-2393–Val-2454 form the Sushi 13 domain. A CUB 14 domain is found at Cys-2456 to Phe-2567. Sushi domains follow at residues Phe-2567 to Ala-2629, Ile-2630 to Val-2691, Val-2692 to Ile-2756, Ile-2757 to Ala-2814, Gly-2815 to Pro-2872, Val-2873 to Val-2930, Val-2931 to Met-2992, Ile-2993 to Gly-3050, Gly-3054 to Ala-3111, Val-3112 to Ile-3170, Ile-3171 to Ala-3230, Val-3231 to Pro-3288, Lys-3289 to Glu-3346, Thr-3350 to Pro-3408, and His-3409 to Ala-3468. A compositionally biased stretch (low complexity) spans Thr-3052–Gly-3065. Residues Thr-3052 to Asp-3071 are disordered. A helical transmembrane segment spans residues Val-3631–Leu-3651. The Cytoplasmic segment spans residues Tyr-3652–Val-3707.

The protein belongs to the CSMD family. In terms of tissue distribution, expressed in the apical dendrites of postnatal hippocampal neurons (at protein level).

It is found in the cell membrane. Functionally, involved in dendrite development. In Mus musculus (Mouse), this protein is CUB and sushi domain-containing protein 3 (Csmd3).